Here is a 623-residue protein sequence, read N- to C-terminus: Chaperone protein HtpG (623 aa).

Residues 1-336 (MVSKQQTMGF…ASDLPLNISR (336 aa)) form an a; substrate-binding region. Residues 337–550 (EILQDNKQVE…EQDMGLEMQR (214 aa)) form a b region. Residues 551–623 (ILQAAGQQVP…NRVNRLLVSS (73 aa)) are c.

It belongs to the heat shock protein 90 family. As to quaternary structure, homodimer.

It is found in the cytoplasm. Molecular chaperone. Has ATPase activity. The chain is Chaperone protein HtpG from Legionella pneumophila subsp. pneumophila (strain Philadelphia 1 / ATCC 33152 / DSM 7513).